A 704-amino-acid polypeptide reads, in one-letter code: Serotransferrin (704 aa).

Residues 1 to 19 (MRPAVRALLACAVLGLCLA) form the signal peptide. Transferrin-like domains are found at residues 25–351 (VRWC…NLRE) and 364–689 (VKWC…NLRQ). 2 cysteine pairs are disulfide-bonded: C28–C66 and C38–C57. Position 42 is a dimethylated arginine (R42). Positions 81 and 113 each coordinate Fe(3+). 5 disulfide bridges follow: C136–C217, C176–C192, C179–C200, C189–C202, and C250–C264. Hydrogencarbonate is bound by residues T138, R142, A144, and G145. Y211 is a Fe(3+) binding site. Residue H272 coordinates Fe(3+). Disulfide bonds link C362–C622, C367–C399, C377–C390, C424–C699, C441–C663, C473–C549, C497–C690, C507–C521, C518–C532, C589–C603, and C641–C646. Residues D414 and Y449 each contribute to the Fe(3+) site. T475, R479, A481, and G482 together coordinate hydrogencarbonate. N514 carries N-linked (GlcNAc...) asparagine glycosylation. Position 543 (Y543) interacts with Fe(3+). Residue H611 participates in Fe(3+) binding. Residue S691 is modified to Phosphoserine.

The protein belongs to the transferrin family. Monomer. Part of a complex composed of SLC40A1/ferroportin, TF/transferrin and HEPH/hephaestin that transfers iron from cells to transferrin. In terms of tissue distribution, expressed by the liver and secreted in plasma.

It localises to the secreted. Its function is as follows. Transferrins are iron binding transport proteins which can bind two Fe(3+) ions in association with the binding of an anion, usually bicarbonate. It is responsible for the transport of iron from sites of absorption and heme degradation to those of storage and utilization. Serum transferrin may also have a further role in stimulating cell proliferation. The protein is Serotransferrin (TF) of Bos taurus (Bovine).